The primary structure comprises 522 residues: MSTLQDFQIAPAILHRVTVRDASAILFCTLLTVFLFISQGTVRGVKRVGKSRLRTLVTGETPLRFDLEKYGYLGYQQFSKKANKPFLVKIYGLDHYVLPVKYLDSLKTVDHHRLSFAQSLNDFLNVDASLGDLVTHSDMEIAVVTKHLNPRLTTLTPVLVDEANFAFEKELGKLETWKTVNALFLSAFLTNRTSGRVLVGDLCRDDNYLHAMMKYTESVFSSGVAFNGIPLGPFRKIVYYLGARQHRRDLDNAAALVLPEIKRRMAAQAEDPNCRKENDAIQWNLDLPLASPKEGLPLRHAHRVLHLSFAATGTVAILITHMIYNVLMYPEYLEPLREEVMACTKAHGGWTEKAMNEMWKLDSFIRETLRVQPPSVFTAYRTVKNQPFTFPDGFTLPVGSRITFPTLPVGLDPENYESASEFDGFRFFRKREEARLAKKAYNWGATKIDSSFLPFGYGNQACPGRFFGVRKTKILFGKLINDYDFSWAEPRSARPENIVIEGQILVNPTPEIKIKSRVAAGM.

The chain crosses the membrane as a helical span at residues 22 to 42 (ASAILFCTLLTVFLFISQGTV). An N-linked (GlcNAc...) asparagine glycan is attached at Asn-191. The chain crosses the membrane as a helical span at residues 304-324 (VLHLSFAATGTVAILITHMIY). A heme-binding site is contributed by Cys-462.

Belongs to the cytochrome P450 family. It depends on heme as a cofactor.

The protein resides in the membrane. The protein operates within mycotoxin biosynthesis. Cytochrome P450 monooxygenase; part of the gene cluster that mediates the biosynthesis of sirodesmin PL, an epipolythiodioxopiperazine (ETP) characterized by a disulfide bridged cyclic dipeptide and that acts as a phytotoxin which is involved in the blackleg didease of canola. SirD catalyzes the O-prenylation of L-tyrosine (L-Tyr) in the presence of dimethylallyl diphosphate (DMAPP) to yield 4-O-dimethylallyl-L-Tyr, and therefore represents probably the first pathway-specific enzyme in the biosynthesis of sirodesmin PL. 4-O-dimethylallyl-L-Tyr, then undergoes condensation with L-Ser in a reaction catalyzed by the non-ribosomal peptide synthase sirP to form the diketopiperazine (DKP) backbone. Further bishydroxylation of the DKP performed by the cytochrome P450 monooxygenase sirC leads to the production of the intermediate phomamide. This step is essential to form the reactive thiol group required for toxicity of sirodesmin PL. The next steps of sirodesmin biosynthesis are not well understood yet, but some predictions could be made from intermediate compounds identification. Phomamide is converted into phomalizarine via oxidation, probably by sirT. Further oxidation, methylation (by sirM or sirN) and reduction steps convert phomalizarine to deacetyl sirodesmin. Finally, acetyltransferase sirH probably acetylates deacetyl sirodesmin to produce sirodesmin PL. This is Cytochrome P450 monooxygenase sirB from Leptosphaeria maculans (Blackleg fungus).